Consider the following 402-residue polypeptide: BTB and MATH domain-containing protein 40 (402 aa).

Positions 1 to 25 (MSDRHLYGSDHSYLSSKPSCSSCRR) are disordered. Over residues 15-25 (SSKPSCSSCRR) the composition is skewed to low complexity. In terms of domain architecture, MATH spans 43 to 177 (VLTQRWTVCN…DKSLVISCHI (135 aa)). The BTB domain maps to 222-295 (TDMTIVAGPL…IYAGVIKSDI (74 aa)).

Interacts with cul-3.

It functions in the pathway protein modification; protein ubiquitination. Probable substrate-specific adapter of an E3 ubiquitin-protein ligase complex which mediates the ubiquitination and subsequent proteasomal degradation of target proteins. The sequence is that of BTB and MATH domain-containing protein 40 (bath-40) from Caenorhabditis elegans.